Consider the following 128-residue polypeptide: Small ribosomal subunit protein uS11 (128 aa).

The protein belongs to the universal ribosomal protein uS11 family. Part of the 30S ribosomal subunit. Interacts with proteins S7 and S18. Binds to IF-3.

In terms of biological role, located on the platform of the 30S subunit, it bridges several disparate RNA helices of the 16S rRNA. Forms part of the Shine-Dalgarno cleft in the 70S ribosome. This Aster yellows witches'-broom phytoplasma (strain AYWB) protein is Small ribosomal subunit protein uS11.